The primary structure comprises 142 residues: Large ribosomal subunit protein uL13 (142 aa).

Belongs to the universal ribosomal protein uL13 family. As to quaternary structure, part of the 50S ribosomal subunit.

In terms of biological role, this protein is one of the early assembly proteins of the 50S ribosomal subunit, although it is not seen to bind rRNA by itself. It is important during the early stages of 50S assembly. In Baumannia cicadellinicola subsp. Homalodisca coagulata, this protein is Large ribosomal subunit protein uL13.